Consider the following 256-residue polypeptide: Thiazole synthase (256 aa).

Lysine 95 acts as the Schiff-base intermediate with DXP in catalysis. 1-deoxy-D-xylulose 5-phosphate is bound by residues glycine 156, 182 to 183, and 204 to 205; these read AG and NT.

It belongs to the ThiG family. Homotetramer. Forms heterodimers with either ThiH or ThiS.

It is found in the cytoplasm. It carries out the reaction [ThiS sulfur-carrier protein]-C-terminal-Gly-aminoethanethioate + 2-iminoacetate + 1-deoxy-D-xylulose 5-phosphate = [ThiS sulfur-carrier protein]-C-terminal Gly-Gly + 2-[(2R,5Z)-2-carboxy-4-methylthiazol-5(2H)-ylidene]ethyl phosphate + 2 H2O + H(+). The protein operates within cofactor biosynthesis; thiamine diphosphate biosynthesis. Functionally, catalyzes the rearrangement of 1-deoxy-D-xylulose 5-phosphate (DXP) to produce the thiazole phosphate moiety of thiamine. Sulfur is provided by the thiocarboxylate moiety of the carrier protein ThiS. In vitro, sulfur can be provided by H(2)S. This Cronobacter sakazakii (strain ATCC BAA-894) (Enterobacter sakazakii) protein is Thiazole synthase.